The sequence spans 625 residues: tRNA uridine 5-carboxymethylaminomethyl modification enzyme MnmG (625 aa).

14-19 contacts FAD; the sequence is GAGHAG. Residue 273 to 287 coordinates NAD(+); it reads GPRYCPSIEDKIVRF.

It belongs to the MnmG family. In terms of assembly, homodimer. Heterotetramer of two MnmE and two MnmG subunits. It depends on FAD as a cofactor.

It localises to the cytoplasm. NAD-binding protein involved in the addition of a carboxymethylaminomethyl (cmnm) group at the wobble position (U34) of certain tRNAs, forming tRNA-cmnm(5)s(2)U34. In Clostridium botulinum (strain Hall / ATCC 3502 / NCTC 13319 / Type A), this protein is tRNA uridine 5-carboxymethylaminomethyl modification enzyme MnmG.